The following is a 693-amino-acid chain: Translation initiation factor IF-2 (693 aa).

In terms of domain architecture, tr-type G spans 181–349; it reads PRPPVVTVMG…MILLVAEMNE (169 aa). The segment at 190 to 197 is G1; sequence GHVDHGKT. 190-197 is a GTP binding site; the sequence is GHVDHGKT. The segment at 215–219 is G2; that stretch reads GITQS. The G3 stretch occupies residues 236–239; the sequence is DTPG. Residues 236-240 and 290-293 each bind GTP; these read DTPGH and NKID. A G4 region spans residues 290-293; it reads NKID. Residues 327-329 are G5; sequence SAR.

This sequence belongs to the TRAFAC class translation factor GTPase superfamily. Classic translation factor GTPase family. IF-2 subfamily.

It is found in the cytoplasm. Functionally, one of the essential components for the initiation of protein synthesis. Protects formylmethionyl-tRNA from spontaneous hydrolysis and promotes its binding to the 30S ribosomal subunits. Also involved in the hydrolysis of GTP during the formation of the 70S ribosomal complex. The protein is Translation initiation factor IF-2 of Thermotoga petrophila (strain ATCC BAA-488 / DSM 13995 / JCM 10881 / RKU-1).